Here is a 639-residue protein sequence, read N- to C-terminus: UvrABC system protein C (639 aa).

The GIY-YIG domain maps to 20–97 (ERSGVYRMFD…IKKFQPKFNI (78 aa)). Residues 207–242 (KELQENLSRKMEELSSQMRFEEAAEIRDRIKALSYV) enclose the UVR domain.

Belongs to the UvrC family. Interacts with UvrB in an incision complex.

The protein resides in the cytoplasm. Its function is as follows. The UvrABC repair system catalyzes the recognition and processing of DNA lesions. UvrC both incises the 5' and 3' sides of the lesion. The N-terminal half is responsible for the 3' incision and the C-terminal half is responsible for the 5' incision. This Rickettsia rickettsii (strain Iowa) protein is UvrABC system protein C.